A 412-amino-acid polypeptide reads, in one-letter code: Peptidase T (412 aa).

Residue H78 coordinates Zn(2+). Residue D80 is part of the active site. D140 is a Zn(2+) binding site. E174 serves as the catalytic Proton acceptor. The Zn(2+) site is built by E175, D197, and H379.

It belongs to the peptidase M20B family. Zn(2+) is required as a cofactor.

It localises to the cytoplasm. The enzyme catalyses Release of the N-terminal residue from a tripeptide.. Cleaves the N-terminal amino acid of tripeptides. The sequence is that of Peptidase T from Staphylococcus epidermidis (strain ATCC 12228 / FDA PCI 1200).